A 1042-amino-acid chain; its full sequence is Signal-induced proliferation-associated protein 1 (1042 aa).

Disordered stretches follow at residues 1 to 87 (MPMW…TSTR) and 132 to 153 (SQGM…EDQA). A Phosphothreonine modification is found at threonine 64. Serine 67 is subject to Phosphoserine. Polar residues predominate over residues 134–146 (GMGSHSEASSGTL). Residues serine 182, serine 304, and serine 314 each carry the phosphoserine modification. Residues 321-539 (LLTLDEQVLS…RTRQQYLQDL (219 aa)) enclose the Rap-GAP domain. In terms of domain architecture, PDZ spans 687-763 (ELALPRDGQG…VCVTVLPPDE (77 aa)). Serine 817, serine 839, and serine 912 each carry phosphoserine. The tract at residues 830–903 (EFLHSQNSLS…PAPELRASFL (74 aa)) is disordered. Residues 832–845 (LHSQNSLSPRSSLS) show a composition bias toward low complexity. The interval 946 to 980 (LSREGQPIPESGDPKGTPKSDAEPEPGNLSEKVSH) is disordered. The segment covering 957–967 (GDPKGTPKSDA) has biased composition (basic and acidic residues). Residues 972–1034 (GNLSEKVSHL…TRLLLASKQL (63 aa)) adopt a coiled-coil conformation.

Interacts with RRP1B; the interaction leads to inhibition of SIPA1 GTPase activity. In terms of tissue distribution, expressed in fetal as well as in adult tissues. Expressed abundantly in the lymphoid tissues such as thymus, spleen and peripheral blood lymphocytes and also shows a significant expression in the spinal cord.

The protein localises to the nucleus. It localises to the cytoplasm. Its subcellular location is the perinuclear region. It is found in the endomembrane system. In terms of biological role, GTPase activator for the nuclear Ras-related regulatory proteins Rap1 and Rap2 in vitro, converting them to the putatively inactive GDP-bound state. Affects cell cycle progression. The protein is Signal-induced proliferation-associated protein 1 (SIPA1) of Homo sapiens (Human).